A 310-amino-acid chain; its full sequence is Junctional adhesion molecule C (310 aa).

The N-terminal stretch at 1–31 (MALRRPPRLRLCARLPDFFLLLLFRGCLIGA) is a signal peptide. At 32–241 (VNLKSSNRTP…EQEMEVYDLN (210 aa)) the chain is on the extracellular side. Residues 35 to 127 (KSSNRTPVVQ…VARNDRKEID (93 aa)) enclose the Ig-like V-type domain. 2 disulfide bridges follow: cysteine 53-cysteine 115 and cysteine 160-cysteine 219. N-linked (GlcNAc...) asparagine glycans are attached at residues asparagine 104 and asparagine 192. Residues 139 to 236 (PVTPVCRVPK…SARCEEQEME (98 aa)) form the Ig-like C2-type domain. Residues 242 to 262 (IGGIIGGVLVVLAVLALITLG) form a helical membrane-spanning segment. The Cytoplasmic portion of the chain corresponds to 263-310 (ICCAYRRGYFINNKQDGESYKNPGKPDGVNYIRTDEEGDFRHKSSFVI). S-palmitoyl cysteine attachment occurs at residues cysteine 264 and cysteine 265.

This sequence belongs to the immunoglobulin superfamily. Interacts with ITGAM. Interacts with GORASP2. In terms of processing, proteolytically cleaved from endothelial cells surface into a soluble form by ADAM10 and ADAM17; the release of soluble JAM3 is increased by pro-inflammatory factors. S-palmitoylated by ZDHHC7. S-palmitoylation promotes expression at tight junctions. In terms of tissue distribution, detected on round and elongated spermatids (at protein level). Highest expression in placenta, brain and kidney. Significant expression is detected on platelets. Expressed in intestinal mucosa cells. Expressed in the vascular endothelium. Found in serum (at protein level). Also detected in the synovial fluid of patients with rheumatoid arthritis, psoriatic arthritis or ostearthritis (at protein level).

It localises to the cell membrane. The protein localises to the cell junction. It is found in the desmosome. Its subcellular location is the tight junction. The protein resides in the secreted. Its function is as follows. Junctional adhesion protein that mediates heterotypic cell-cell interactions with its cognate receptor JAM2 to regulate different cellular processes. Plays a role in homing and mobilization of hematopoietic stem and progenitor cells within the bone marrow. At the surface of bone marrow stromal cells, it contributes to the retention of the hematopoietic stem and progenitor cells expressing JAM3. Plays a central role in leukocytes extravasation by facilitating transmigration through the endothelium. Plays a role in spermatogenesis where JAM2 and JAM3, which are respectively expressed by Sertoli and germ cells, mediate an interaction between both cell types and play an essential role in the anchorage of germ cells onto Sertoli cells and the assembly of cell polarity complexes during spermatid differentiation. Also functions as a counter-receptor for ITGAM, mediating leukocyte-platelet interactions and is involved in the regulation of transepithelial migration of polymorphonuclear neutrophils (PMN). Plays a role in angiogenesis. Plays a role in the regulation of cell migration. During myogenesis, it is involved in myocyte fusion. Functionally, promotes chemotaxis of vascular endothelial cells and stimulates angiogenesis. The sequence is that of Junctional adhesion molecule C (JAM3) from Homo sapiens (Human).